The sequence spans 580 residues: FAD-dependent monooxygenase DEP4 (580 aa).

47-50 (VWSK) contributes to the FAD binding site. Residue 58–60 (FAQ) coordinates NADP(+). Val-112 serves as a coordination point for FAD. Residues 186–205 (VGRSKSSYDAVYHLLCAGKK), 222–223 (AP), and 354–355 (DI) each bind NADP(+). Met-473 serves as a coordination point for FAD.

The protein belongs to the FAD-binding monooxygenase family. FAD is required as a cofactor.

The protein operates within polyketide biosynthesis. Functionally, part of the gene cluster that mediates the biosynthesis of depudecin, a highly oxidized eleven-carbon linear polyketide that acts as a histone deacetylase (HDAC) inhibitor and makes a small contribution to pathogenesis. The reducing polyketide synthase DEP5 is the central enzyme in depudecin biosynthesis by yielding the backbone polyketide chain. The monooxygenases DEP2 and DEP4, as well as the uncharacterized protein DEP1, then act as tailoring enzymes to modify the intermediate polyketide chain into depudecin. This chain is FAD-dependent monooxygenase DEP4, found in Fusarium langsethiae.